A 116-amino-acid chain; its full sequence is Transcription elongation factor SPT4 homolog 1 (116 aa).

The C4-type zinc finger occupies 19-39 (CLRCRLVKTYDQFRDSGCENC).

Belongs to the SPT4 family.

The protein localises to the nucleus. Functionally, may regulate transcription elongation by RNA polymerase II. May enhance transcriptional pausing at sites proximal to the promoter, which may in turn facilitate the assembly of an elongation competent RNA polymerase II complex. The chain is Transcription elongation factor SPT4 homolog 1 from Arabidopsis thaliana (Mouse-ear cress).